The chain runs to 419 residues: Serine hydroxymethyltransferase (419 aa).

(6S)-5,6,7,8-tetrahydrofolate-binding positions include Leu-121 and 125 to 127; that span reads GHL. Lys-229 carries the post-translational modification N6-(pyridoxal phosphate)lysine. 354 to 356 lines the (6S)-5,6,7,8-tetrahydrofolate pocket; the sequence is SPF.

It belongs to the SHMT family. Homodimer. Pyridoxal 5'-phosphate serves as cofactor.

Its subcellular location is the cytoplasm. The catalysed reaction is (6R)-5,10-methylene-5,6,7,8-tetrahydrofolate + glycine + H2O = (6S)-5,6,7,8-tetrahydrofolate + L-serine. It functions in the pathway one-carbon metabolism; tetrahydrofolate interconversion. It participates in amino-acid biosynthesis; glycine biosynthesis; glycine from L-serine: step 1/1. In terms of biological role, catalyzes the reversible interconversion of serine and glycine with tetrahydrofolate (THF) serving as the one-carbon carrier. This reaction serves as the major source of one-carbon groups required for the biosynthesis of purines, thymidylate, methionine, and other important biomolecules. Also exhibits THF-independent aldolase activity toward beta-hydroxyamino acids, producing glycine and aldehydes, via a retro-aldol mechanism. The polypeptide is Serine hydroxymethyltransferase (Coxiella burnetii (strain RSA 493 / Nine Mile phase I)).